The sequence spans 178 residues: Large ribosomal subunit protein uL6 (178 aa).

This sequence belongs to the universal ribosomal protein uL6 family. As to quaternary structure, part of the 50S ribosomal subunit.

This protein binds to the 23S rRNA, and is important in its secondary structure. It is located near the subunit interface in the base of the L7/L12 stalk, and near the tRNA binding site of the peptidyltransferase center. The sequence is that of Large ribosomal subunit protein uL6 from Helicobacter hepaticus (strain ATCC 51449 / 3B1).